Consider the following 104-residue polypeptide: Interferon alpha-inducible protein 27-like protein 1 (104 aa).

The next 3 helical transmembrane spans lie at 14-34 (VAAV…LSAM), 59-79 (GGGV…AAGL), and 81-101 (VTSK…LGSP).

It belongs to the IFI6/IFI27 family.

It localises to the membrane. Plays a role in the apoptotic process and has a pro-apoptotic activity. The chain is Interferon alpha-inducible protein 27-like protein 1 from Homo sapiens (Human).